Here is a 250-residue protein sequence, read N- to C-terminus: LexA repressor (250 aa).

A compositionally biased stretch (basic and acidic residues) spans 1–21; it reads MTSQERGTRRGDTRGNVRDFP. Residues 1 to 33 are disordered; sequence MTSQERGTRRGDTRGNVRDFPDSPADASGLTQR. A DNA-binding region (H-T-H motif) is located at residues 54–74; sequence VREIGEAVGLTSTSSVAHQLK. Residues Ser174 and Lys211 each act as for autocatalytic cleavage activity in the active site.

This sequence belongs to the peptidase S24 family. In terms of assembly, homodimer.

The catalysed reaction is Hydrolysis of Ala-|-Gly bond in repressor LexA.. Functionally, represses a number of genes involved in the response to DNA damage (SOS response), including recA and lexA. In the presence of single-stranded DNA, RecA interacts with LexA causing an autocatalytic cleavage which disrupts the DNA-binding part of LexA, leading to derepression of the SOS regulon and eventually DNA repair. The sequence is that of LexA repressor from Parafrankia sp. (strain EAN1pec).